The primary structure comprises 194 residues: Adenine phosphoribosyltransferase (194 aa).

It belongs to the purine/pyrimidine phosphoribosyltransferase family. As to quaternary structure, homodimer.

It is found in the cytoplasm. It carries out the reaction AMP + diphosphate = 5-phospho-alpha-D-ribose 1-diphosphate + adenine. The protein operates within purine metabolism; AMP biosynthesis via salvage pathway; AMP from adenine: step 1/1. Functionally, catalyzes a salvage reaction resulting in the formation of AMP, that is energically less costly than de novo synthesis. This Albidiferax ferrireducens (strain ATCC BAA-621 / DSM 15236 / T118) (Rhodoferax ferrireducens) protein is Adenine phosphoribosyltransferase.